The primary structure comprises 266 residues: Putative tyrosine phosphatase 197R (266 aa).

In terms of domain architecture, Tyrosine-protein phosphatase spans 15 to 167 (RPTLGSLSDK…LFGSQNINND (153 aa)). Cysteine 111 (phosphocysteine intermediate) is an active-site residue.

This sequence belongs to the protein-tyrosine phosphatase family.

The enzyme catalyses O-phospho-L-tyrosyl-[protein] + H2O = L-tyrosyl-[protein] + phosphate. The chain is Putative tyrosine phosphatase 197R from Invertebrate iridescent virus 6 (IIV-6).